The sequence spans 326 residues: Small ribosomal subunit protein RACK1x (326 aa).

WD repeat units follow at residues 13–53 (AHTD…KSYG), 61–100 (GHSH…TTRR), 103–142 (GHTK…KYTI), 147–188 (GHKE…LRNS), 191–230 (GHSG…KLYS), 232–270 (EAGS…VVED), and 290–326 (NQKK…IGRY).

This sequence belongs to the WD repeat G protein beta family. Ribosomal protein RACK1 subfamily. In terms of assembly, homodimer and heterodimer with RACK1A or RACK1B. Interacts with GB1, MEKK1, MKK4, MKK5, MPK3 and MPK6, but not with GPA1 or MPK4. In terms of tissue distribution, widely expressed.

Its function is as follows. Minor component of the RACK1 regulatory proteins that play a role in multiple signal transduction pathways. Involved in multiple hormone responses and developmental processes. MAPK cascade scaffolding protein involved in the protease IV and ArgC signaling pathway but not the flg22 pathway. The protein is Small ribosomal subunit protein RACK1x of Arabidopsis thaliana (Mouse-ear cress).